Consider the following 542-residue polypeptide: uncharacterized protein (542 aa).

The next 12 helical transmembrane spans lie at 12–32, 57–77, 94–114, 123–143, 168–188, 191–211, 216–236, 243–263, 277–297, 313–333, 358–378, and 391–411; these read LVFG…GTVL, FGDV…AILY, VIVM…SWTA, AAAV…AGLA, LFAV…AALV, FVVS…LVTL, IDAP…AFLL, SGVV…PTVI, IATF…IPGA, VLAL…VQAT, VTSW…AVPM, and LIIF…GTSL.

Belongs to the monovalent cation:proton antiporter 1 (CPA1) transporter (TC 2.A.36) family.

The protein resides in the cell membrane. This is an uncharacterized protein from Mycobacterium bovis (strain ATCC BAA-935 / AF2122/97).